We begin with the raw amino-acid sequence, 671 residues long: DNA ligase (671 aa).

Residues 32 to 36 (DAEYD), 81 to 82 (SL), and Glu113 each bind NAD(+). The active-site N6-AMP-lysine intermediate is the Lys115. The NAD(+) site is built by Arg136, Glu173, Lys290, and Lys314. The Zn(2+) site is built by Cys408, Cys411, Cys426, and Cys432. Residues 593 to 671 (EIDSPFAGKT…EAEMIRLLGA (79 aa)) enclose the BRCT domain.

The protein belongs to the NAD-dependent DNA ligase family. LigA subfamily. Mg(2+) serves as cofactor. Mn(2+) is required as a cofactor.

The enzyme catalyses NAD(+) + (deoxyribonucleotide)n-3'-hydroxyl + 5'-phospho-(deoxyribonucleotide)m = (deoxyribonucleotide)n+m + AMP + beta-nicotinamide D-nucleotide.. In terms of biological role, DNA ligase that catalyzes the formation of phosphodiester linkages between 5'-phosphoryl and 3'-hydroxyl groups in double-stranded DNA using NAD as a coenzyme and as the energy source for the reaction. It is essential for DNA replication and repair of damaged DNA. The protein is DNA ligase of Salmonella choleraesuis (strain SC-B67).